A 499-amino-acid chain; its full sequence is Glycerol kinase (499 aa).

Residue Thr17 participates in ADP binding. ATP contacts are provided by Thr17, Thr18, and Ser19. Thr17 serves as a coordination point for sn-glycerol 3-phosphate. An ADP-binding site is contributed by Arg21. Sn-glycerol 3-phosphate is bound by residues Arg87, Glu88, Tyr139, and Asp243. Arg87, Glu88, Tyr139, Asp243, and Gln244 together coordinate glycerol. ADP contacts are provided by Thr265 and Gly308. ATP contacts are provided by Thr265, Gly308, Gln312, and Gly409. Gly409 and Asn413 together coordinate ADP.

Belongs to the FGGY kinase family.

It catalyses the reaction glycerol + ATP = sn-glycerol 3-phosphate + ADP + H(+). It participates in polyol metabolism; glycerol degradation via glycerol kinase pathway; sn-glycerol 3-phosphate from glycerol: step 1/1. With respect to regulation, inhibited by fructose 1,6-bisphosphate (FBP). In terms of biological role, key enzyme in the regulation of glycerol uptake and metabolism. Catalyzes the phosphorylation of glycerol to yield sn-glycerol 3-phosphate. The polypeptide is Glycerol kinase (Pseudomonas entomophila (strain L48)).